The following is a 343-amino-acid chain: uncharacterized protein (343 aa).

This is an uncharacterized protein from Tortricidae (ClGV).